Reading from the N-terminus, the 156-residue chain is ATP synthase subunit b (156 aa).

A helical transmembrane segment spans residues 7–27 (LFVQAIVFLILVLFTMKFVWP).

This sequence belongs to the ATPase B chain family. As to quaternary structure, F-type ATPases have 2 components, F(1) - the catalytic core - and F(0) - the membrane proton channel. F(1) has five subunits: alpha(3), beta(3), gamma(1), delta(1), epsilon(1). F(0) has three main subunits: a(1), b(2) and c(10-14). The alpha and beta chains form an alternating ring which encloses part of the gamma chain. F(1) is attached to F(0) by a central stalk formed by the gamma and epsilon chains, while a peripheral stalk is formed by the delta and b chains.

The protein localises to the cell inner membrane. F(1)F(0) ATP synthase produces ATP from ADP in the presence of a proton or sodium gradient. F-type ATPases consist of two structural domains, F(1) containing the extramembraneous catalytic core and F(0) containing the membrane proton channel, linked together by a central stalk and a peripheral stalk. During catalysis, ATP synthesis in the catalytic domain of F(1) is coupled via a rotary mechanism of the central stalk subunits to proton translocation. Its function is as follows. Component of the F(0) channel, it forms part of the peripheral stalk, linking F(1) to F(0). In Delftia acidovorans (strain DSM 14801 / SPH-1), this protein is ATP synthase subunit b.